A 183-amino-acid polypeptide reads, in one-letter code: Ubiquitin-conjugating enzyme E2 6 (183 aa).

Residues 1-148 (MASPSKRREM…VKEYCEKYAK (148 aa)) form the UBC core domain. Cys85 acts as the Glycyl thioester intermediate in catalysis. Residues 148–183 (KPEEILSDDDDDDSMSEDGSDSDDDDDDEIVGKADP) form a disordered region. The segment covering 152–176 (ILSDDDDDDSMSEDGSDSDDDDDDE) has biased composition (acidic residues).

It belongs to the ubiquitin-conjugating enzyme family. As to expression, expressed in roots, petals, sepals and silique walls.

The enzyme catalyses S-ubiquitinyl-[E1 ubiquitin-activating enzyme]-L-cysteine + [E2 ubiquitin-conjugating enzyme]-L-cysteine = [E1 ubiquitin-activating enzyme]-L-cysteine + S-ubiquitinyl-[E2 ubiquitin-conjugating enzyme]-L-cysteine.. The protein operates within protein modification; protein ubiquitination. Functionally, accepts the ubiquitin from the E1 complex and catalyzes its covalent attachment to other proteins. The chain is Ubiquitin-conjugating enzyme E2 6 (UBC6) from Arabidopsis thaliana (Mouse-ear cress).